Here is a 476-residue protein sequence, read N- to C-terminus: Rab-3A-interacting protein (476 aa).

A phosphoserine; by PKB/AKT1 mark is found at serine 163 and serine 165. A coiled-coil region spans residues 165–260 (SVLEVREKGY…EVAALKTLVL (96 aa)). The interval 262 to 297 (SSPTSPTQEPLPGGKTPFKKGHTRNKSTSSAMSGSH) is disordered. Phosphoserine occurs at positions 263, 266, 288, and 296. The segment covering 287-297 (KSTSSAMSGSH) has biased composition (polar residues). The important for RAB11A binding stretch occupies residues 435–444 (TYIRYIQQGL).

The protein belongs to the SEC2 family. In terms of assembly, homodimer. Interacts with the N-terminal region of SSX2. Interacts with the GDP-bound forms of RAB8A and RAB8B. The interaction with RAB8A is prevented by phosphorylation of RAB8A at 'Thr-72'. Interacts with the GDP-bound forms of RAB3A and RAB3D. Interacts with DCDC1. Interacts (via the N-terminal region) with TRAPPC14; this interaction mediates RAB3IP association with the TRAPP II complex. Forms a heterotetramer with RAB11A where RAB3IP homodimer binds two RAB11A subunits. Forms a complex with RAB11A and RAB11FIP3, probably a heterohexamer with two of each protein subunit, where Rabin8/RAB3IP and RAB11FIP3 simultaneously bind to RAB11A; the complex promotes preciliary trafficking. Forms a complex containing RAB11A, ASAP1, RAB3IP, RAP11FIP3 and ARF4; the complex promotes preciliary trafficking; the complex binds to RHO in photoreceptor cells and promotes RHO ciliary transport. Post-translationally, phosphorylated by AKT1; the phosphorylation alters its GEF activity. In terms of tissue distribution, expressed in brain, kidney, heart, pancreas and placenta. Not detected in skeletal muscle or liver.

It localises to the cytoplasm. Its subcellular location is the nucleus. It is found in the cytoskeleton. The protein resides in the cell projection. The protein localises to the lamellipodium. It localises to the vesicle. Its subcellular location is the microtubule organizing center. It is found in the centrosome. Phosphorylation by ATK1 alters its GEF activity. Complex formation with RAB11A and RAB11FIP3 and ciliogenesis function are competitively inhibited by RAB11A-WDR44 interaction. Guanine nucleotide exchange factor (GEF) which may activate RAB8A and RAB8B. Promotes the exchange of GDP to GTP, converting inactive GDP-bound Rab proteins into their active GTP-bound form. Mediates the release of GDP from RAB8A and RAB8B but not from RAB3A or RAB5. Modulates actin organization and promotes polarized transport of RAB8A-specific vesicles to the cell surface. Together with RAB11A, RAB8A, the exocyst complex, PARD3, PRKCI, ANXA2, CDC42 and DNMBP promotes transcytosis of PODXL to the apical membrane initiation sites (AMIS), apical surface formation and lumenogenesis. Part of the ciliary targeting complex containing Rab11, ASAP1, RAB3IP and RAB11FIP3 and ARF4 that promotes RAB3IP preciliary vesicle trafficking to mother centriole and ciliogenesis initiation. This chain is Rab-3A-interacting protein, found in Homo sapiens (Human).